Reading from the N-terminus, the 50-residue chain is uncharacterized protein (50 aa).

The disordered stretch occupies residues 1–50 (MKTGFWQQVLPKRAGRRKEHPVQYMPHKKEENATGLMNPSLHTSHSAILK). A compositionally biased stretch (polar residues) spans 35–50 (GLMNPSLHTSHSAILK).

This is an uncharacterized protein from Treponema pallidum (strain Nichols).